The following is a 316-amino-acid chain: Protoheme IX farnesyltransferase (316 aa).

Positions 1–21 (MAKSQALGNAPLTSTVAENAT) are disordered. The segment covering 11 to 21 (PLTSTVAENAT) has biased composition (polar residues). The next 9 helical transmembrane spans lie at 42-62 (VVAMLLLTALVGMCLAVPGIP), 67-87 (VILGLIGIGFQSAAAAAFNHV), 115-135 (VVFASTLMVMGFVILLELNAL), 136-156 (TAWLTMASLVGYAVVYTVWLK), 163-183 (IVIGGIAGAAPPLLGWTAVTG), 189-209 (ALLLVMLVFTWTPPHFWALAI), 235-255 (MVLLYTVMLFIVGLLPWLTGM), 256-276 (SGGVYLVGSSLLNLGFIGYAL), and 295-315 (IWHLLALFVVLLGDHWITSLM).

It belongs to the UbiA prenyltransferase family. Protoheme IX farnesyltransferase subfamily.

It is found in the cell inner membrane. The enzyme catalyses heme b + (2E,6E)-farnesyl diphosphate + H2O = Fe(II)-heme o + diphosphate. Its pathway is porphyrin-containing compound metabolism; heme O biosynthesis; heme O from protoheme: step 1/1. In terms of biological role, converts heme B (protoheme IX) to heme O by substitution of the vinyl group on carbon 2 of heme B porphyrin ring with a hydroxyethyl farnesyl side group. The sequence is that of Protoheme IX farnesyltransferase from Photobacterium profundum (strain SS9).